Consider the following 103-residue polypeptide: Cell division protein CrgA (103 aa).

Transmembrane regions (helical) follow at residues 49–69 (FVPL…VYYL) and 80–100 (IGAW…LMTM).

The protein belongs to the CrgA family.

It is found in the cell membrane. Functionally, involved in cell division. The chain is Cell division protein CrgA from Bifidobacterium longum (strain NCC 2705).